Consider the following 323-residue polypeptide: Annexin A3 (323 aa).

At Ala-2 the chain carries N-acetylalanine. Annexin repeat units lie at residues 18-89 (FNPS…ALVT), 90-161 (PPAV…ILAN), 173-245 (QLAR…AIVR), and 249-320 (NTPA…KICG). Position 177 is an N6-acetyllysine (Lys-177). Residue Thr-267 is modified to Phosphothreonine.

The protein belongs to the annexin family.

Inhibitor of phospholipase A2, also possesses anti-coagulant properties. Also cleaves the cyclic bond of inositol 1,2-cyclic phosphate to form inositol 1-phosphate. The protein is Annexin A3 (ANXA3) of Bos taurus (Bovine).